The following is a 458-amino-acid chain: Argininosuccinate lyase (458 aa).

It belongs to the lyase 1 family. Argininosuccinate lyase subfamily.

The protein resides in the cytoplasm. The catalysed reaction is 2-(N(omega)-L-arginino)succinate = fumarate + L-arginine. The protein operates within amino-acid biosynthesis; L-arginine biosynthesis; L-arginine from L-ornithine and carbamoyl phosphate: step 3/3. This is Argininosuccinate lyase from Salmonella dublin (strain CT_02021853).